The chain runs to 264 residues: Small ribosomal subunit protein uS2 (264 aa).

Positions 228–264 (QLDAEDDYEDYDGSEYDDDYEETEYTDAVIPDEETEE) are disordered. Residues 230-264 (DAEDDYEDYDGSEYDDDYEETEYTDAVIPDEETEE) are compositionally biased toward acidic residues.

It belongs to the universal ribosomal protein uS2 family.

The polypeptide is Small ribosomal subunit protein uS2 (Nostoc punctiforme (strain ATCC 29133 / PCC 73102)).